Reading from the N-terminus, the 165-residue chain is MAPSLWKGLVGIGLFALAHAAFSAAQHYFPSSGIKWKRKCEFLQSSSFQDKIFRSMYYVYDRSYMRLTEKEDESLPIDIVLQTLLAFAVTCYGIVHIAGEFKDMDATSELKNKTFDTLRNHPSFYVYNHRGRVLFRPSDTTNSSNQDALSSNTSLKLRKLESLRR.

Residues 1 to 3 are Cytoplasmic-facing; that stretch reads MAP. The helical transmembrane segment at 4–22 threads the bilayer; the sequence is SLWKGLVGIGLFALAHAAF. Residues 23 to 77 are Lumenal-facing; that stretch reads SAAQHYFPSSGIKWKRKCEFLQSSSFQDKIFRSMYYVYDRSYMRLTEKEDESLPI. A helical membrane pass occupies residues 78–97; sequence DIVLQTLLAFAVTCYGIVHI. Topologically, residues 98–165 are cytoplasmic; that stretch reads AGEFKDMDAT…KLRKLESLRR (68 aa). Position 154 is a phosphoserine (Ser-154).

This sequence belongs to the membrane magnesium transporter (TC 1.A.67) family. As to quaternary structure, component of the ER membrane protein complex (EMC).

The protein localises to the endoplasmic reticulum membrane. Its subcellular location is the golgi apparatus membrane. It is found in the early endosome membrane. Functionally, part of the endoplasmic reticulum membrane protein complex (EMC) that enables the energy-independent insertion into endoplasmic reticulum membranes of newly synthesized membrane proteins. Preferentially accommodates proteins with transmembrane domains that are weakly hydrophobic or contain destabilizing features such as charged and aromatic residues. Involved in the cotranslational insertion of multi-pass membrane proteins in which stop-transfer membrane-anchor sequences become ER membrane spanning helices. It is also required for the post-translational insertion of tail-anchored/TA proteins in endoplasmic reticulum membranes. By mediating the proper cotranslational insertion of N-terminal transmembrane domains in an N-exo topology, with translocated N-terminus in the lumen of the ER, controls the topology of multi-pass membrane proteins like the G protein-coupled receptors. By regulating the insertion of various proteins in membranes, it is indirectly involved in many cellular processes. May be involved in Mg(2+) transport. This chain is ER membrane protein complex subunit 5, found in Bos taurus (Bovine).